The chain runs to 88 residues: UPF0250 protein bbp_432 (88 aa).

Belongs to the UPF0250 family.

This chain is UPF0250 protein bbp_432, found in Buchnera aphidicola subsp. Baizongia pistaciae (strain Bp).